A 99-amino-acid chain; its full sequence is MPNTKSAKKRVRVSEKRRLRNKAYKTFFKNRIKEVIKAIENGEPKEVVLELARKAQAAIDKAVSKGVIHKNQGARRKERLFKRVNEYLKSLEAAETTQE.

It belongs to the bacterial ribosomal protein bS20 family.

In terms of biological role, binds directly to 16S ribosomal RNA. The sequence is that of Small ribosomal subunit protein bS20 from Thermotoga neapolitana (strain ATCC 49049 / DSM 4359 / NBRC 107923 / NS-E).